The chain runs to 480 residues: DNA repair protein RadA (480 aa).

The C4-type zinc-finger motif lies at 10–27; that stretch reads CSECRHVSAKWVGRCLEC. Position 95 to 102 (95 to 102) interacts with ATP; sequence GDPGVGKS. Residues 254-258 carry the RadA KNRFG motif motif; that stretch reads KNRFG. Residues 353–480 form a lon-protease-like region; the sequence is DIYLSTVGGM…TGHVPLGRGT (128 aa). The interval 459–480 is disordered; that stretch reads GTTLATPPSHSGTGHVPLGRGT. The segment covering 461-470 has biased composition (polar residues); sequence TLATPPSHSG.

Belongs to the RecA family. RadA subfamily.

In terms of biological role, DNA-dependent ATPase involved in processing of recombination intermediates, plays a role in repairing DNA breaks. Stimulates the branch migration of RecA-mediated strand transfer reactions, allowing the 3' invading strand to extend heteroduplex DNA faster. Binds ssDNA in the presence of ADP but not other nucleotides, has ATPase activity that is stimulated by ssDNA and various branched DNA structures, but inhibited by SSB. Does not have RecA's homology-searching function. This Mycobacterium tuberculosis (strain CDC 1551 / Oshkosh) protein is DNA repair protein RadA.